A 254-amino-acid polypeptide reads, in one-letter code: Acetyl-coenzyme A carboxylase carboxyl transferase subunit beta (254 aa).

Residues 1–254 enclose the CoA carboxyltransferase N-terminal domain; sequence MWLRCPHCHQ…LLKTGSVANE (254 aa). Residues cysteine 5, cysteine 8, cysteine 23, and cysteine 26 each contribute to the Zn(2+) site. The C4-type zinc-finger motif lies at 5–26; that stretch reads CPHCHQLLFAKQLTQYAVCPNC.

This sequence belongs to the AccD/PCCB family. In terms of assembly, acetyl-CoA carboxylase is a heterohexamer composed of biotin carboxyl carrier protein (AccB), biotin carboxylase (AccC) and two subunits each of ACCase subunit alpha (AccA) and ACCase subunit beta (AccD). Zn(2+) is required as a cofactor.

The protein resides in the cytoplasm. The catalysed reaction is N(6)-carboxybiotinyl-L-lysyl-[protein] + acetyl-CoA = N(6)-biotinyl-L-lysyl-[protein] + malonyl-CoA. The protein operates within lipid metabolism; malonyl-CoA biosynthesis; malonyl-CoA from acetyl-CoA: step 1/1. Functionally, component of the acetyl coenzyme A carboxylase (ACC) complex. Biotin carboxylase (BC) catalyzes the carboxylation of biotin on its carrier protein (BCCP) and then the CO(2) group is transferred by the transcarboxylase to acetyl-CoA to form malonyl-CoA. The polypeptide is Acetyl-coenzyme A carboxylase carboxyl transferase subunit beta (Limosilactobacillus reuteri (strain DSM 20016) (Lactobacillus reuteri)).